Reading from the N-terminus, the 147-residue chain is Hemoglobin subunit beta-2 (147 aa).

Positions 3-147 (HWTAEEKAAI…LVDGLSQGYN (145 aa)) constitute a Globin domain. Heme b is bound by residues histidine 64 and histidine 93.

The protein belongs to the globin family. As to quaternary structure, heterotetramer of two alpha chains and two beta chains. In terms of tissue distribution, red blood cells.

In terms of biological role, involved in oxygen transport from the lung to the various peripheral tissues. This chain is Hemoglobin subunit beta-2 (hbb2), found in Xenopus laevis (African clawed frog).